A 697-amino-acid chain; its full sequence is Putative ATP-dependent RNA helicase an3 (697 aa).

Residues 27–189 are disordered; that stretch reads ESGVAGTKGR…PLAPNDRVEQ (163 aa). Basic and acidic residues-rich tracts occupy residues 89-111, 135-144, and 151-170; these read GRSD…DKDA, RRTDDRRQDG, and RSDK…WSDD. Residues 221–249 carry the Q motif motif; it reads ESFHDVTMGEIIMGNIQLTRYTRPTPVQK. ATP-binding positions include 241 to 248 and 265 to 272; these read YTRPTPVQ and AQTGSGKT. One can recognise a Helicase ATP-binding domain in the interval 252 to 444; it reads IPIIIEKRDL…RDFLDEYIFL (193 aa). The short motif at 388 to 391 is the DEAD box element; the sequence is DEAD. Residues 455–616 enclose the Helicase C-terminal domain; it reads NITQKVVWVE…EVPSWLENMA (162 aa). A disordered region spans residues 619 to 666; sequence QHHKSSSRGRSKSRFSGGFGAKDYRQSSGAGSSFGSSRGGRSSGHGGS. Residues 622-631 are compositionally biased toward basic residues; sequence KSSSRGRSKS. Low complexity predominate over residues 645–654; that stretch reads SSGAGSSFGS. Residues 655-666 show a composition bias toward gly residues; it reads SRGGRSSGHGGS.

The protein belongs to the DEAD box helicase family. DDX3/DED1 subfamily.

Its subcellular location is the cell membrane. The protein resides in the nucleus. It is found in the cytoplasm. It localises to the stress granule. The protein localises to the inflammasome. Its subcellular location is the cell projection. The protein resides in the lamellipodium. It carries out the reaction ATP + H2O = ADP + phosphate + H(+). Functionally, multifunctional ATP-dependent RNA helicase. The ATPase activity can be stimulated by various ribo-and deoxynucleic acids indicative for a relaxed substrate specificity. In vitro can unwind partially double-stranded DNA with a preference for 5'-single-stranded DNA overhangs. Involved in many cellular processes, which do not necessarily require its ATPase/helicase catalytic activities. Involved in the regulation of transcription and translation initiation. Involved in innate immunity. Involved in both stress and inflammatory responses. May negatively regulate extrinsic apoptotic signaling pathway via death domain receptors. May be involved in mitotic chromosome segregation. Required for canonical Wnt signaling involved in anteroposterior neural patterning. The chain is Putative ATP-dependent RNA helicase an3 (an3) from Xenopus laevis (African clawed frog).